The following is a 277-amino-acid chain: MEMO1 family protein Tpet_0837 (277 aa).

It belongs to the MEMO1 family.

This is MEMO1 family protein Tpet_0837 from Thermotoga petrophila (strain ATCC BAA-488 / DSM 13995 / JCM 10881 / RKU-1).